A 373-amino-acid polypeptide reads, in one-letter code: SH3 domain-binding protein 5-like (373 aa).

Residues 1–53 (MEGKEGPSCEVRLPTPGAEREGPIHPELGAFGETASNTIKLSESSNDGKKEEI) are disordered. Polar residues predominate over residues 34–45 (TASNTIKLSESS). Coiled-coil stretches lie at residues 55 to 98 (EELD…ESAR) and 170 to 272 (WQEM…SEEI). Disordered stretches follow at residues 276–305 (RTQS…TGPP) and 344–373 (TGAV…SVSL). The span at 344-358 (TGAVECGGSRERGGD) shows a compositional bias: basic and acidic residues.

This sequence belongs to the SH3BP5 family.

Functions as a guanine nucleotide exchange factor (GEF) for rab11a. The chain is SH3 domain-binding protein 5-like (sh3bp5l) from Xenopus tropicalis (Western clawed frog).